A 152-amino-acid polypeptide reads, in one-letter code: Ribosome maturation factor RimP (152 aa).

The protein belongs to the RimP family.

The protein localises to the cytoplasm. Its function is as follows. Required for maturation of 30S ribosomal subunits. This chain is Ribosome maturation factor RimP, found in Fervidobacterium nodosum (strain ATCC 35602 / DSM 5306 / Rt17-B1).